The chain runs to 193 residues: dCTP deaminase, dUMP-forming (193 aa).

DCTP is bound by residues 101–106 (KSSLGR), D119, 127–129 (TLE), Q148, Y162, and Q174. The active-site Proton donor/acceptor is E129. The segment at 162–184 (YGSKGTGSHYQGQRGPTPSRSYE) is disordered. The segment covering 167–183 (TGSHYQGQRGPTPSRSY) has biased composition (polar residues).

It belongs to the dCTP deaminase family. In terms of assembly, homotrimer.

The catalysed reaction is dCTP + 2 H2O = dUMP + NH4(+) + diphosphate. Its pathway is pyrimidine metabolism; dUMP biosynthesis; dUMP from dCTP: step 1/1. Functionally, bifunctional enzyme that catalyzes both the deamination of dCTP to dUTP and the hydrolysis of dUTP to dUMP without releasing the toxic dUTP intermediate. In Bifidobacterium longum (strain DJO10A), this protein is dCTP deaminase, dUMP-forming.